The primary structure comprises 381 residues: Terpene cyclase ATR13 (381 aa).

The protein belongs to the terpene synthase family.

It participates in mycotoxin biosynthesis. Its function is as follows. Terpene cyclase; part of the core atranone cluster (CAC) which products are predicted to catalyze most or all steps of mycotoxin atranone synthesis, starting from geranylgeranyl pyrophosphate (GGPP). The initial cyclization of GGPP to dolabellane is probably performed by the terpene cyclase ATR13. The Baeyer-Villiger oxidation near the end of the atranone synthesis, which converts atranones D and E to atranones F and G is predicted to be catalyzed by the monooxygenase ATR8. Of the CAC's other predicted gene products, the reducing PKS ATR6 might synthesize a polyketide chain. This polyketide is probably transferred onto the atranone backbone by the polyketide transferase ATR5. Other predicted CAC products include 4 oxygenases (ATR2, ATR3, ATR4, and ATR14), 3 short-chain reductases (ATR7, ATR9, and ATR10), and a methyltransferase (ATR12). These may all be involved in the various steps of atranone biosynthesis, although their specific roles must await experimental determination. This chain is Terpene cyclase ATR13, found in Stachybotrys chlorohalonatus (strain IBT 40285).